The sequence spans 620 residues: Toxin coregulated pilus biosynthesis protein I (620 aa).

One can recognise a Methyl-accepting transducer domain in the interval 344-580; the sequence is TMNDLSIKQT…DVAKQMEDIR (237 aa).

Belongs to the methyl-accepting chemotaxis (MCP) protein family.

It is found in the cell inner membrane. Functionally, may function as an environmental regulator of TCP biogenesis. Negatively regulates the synthesis of the major pilin subunit of TCP (TcpA). This chain is Toxin coregulated pilus biosynthesis protein I (tcpI), found in Vibrio cholerae serotype O1 (strain ATCC 39315 / El Tor Inaba N16961).